The chain runs to 221 residues: Telomere repeats-binding bouquet formation protein 2 (221 aa).

It belongs to the TERB2 family. Component of the MAJIN-TERB1-TERB2 complex, composed of MAJIN, TERB1 and TERB2.

It localises to the chromosome. The protein resides in the telomere. The protein localises to the nucleus inner membrane. Meiosis-specific telomere-associated protein involved in meiotic telomere attachment to the nucleus inner membrane, a crucial step for homologous pairing and synapsis. Component of the MAJIN-TERB1-TERB2 complex, which promotes telomere cap exchange by mediating attachment of telomeric DNA to the inner nuclear membrane and replacement of the protective cap of telomeric chromosomes: in early meiosis, the MAJIN-TERB1-TERB2 complex associates with telomeric DNA and the shelterin/telosome complex. During prophase, the complex matures and promotes release of the shelterin/telosome complex from telomeric DNA. In Bos taurus (Bovine), this protein is Telomere repeats-binding bouquet formation protein 2.